A 101-amino-acid polypeptide reads, in one-letter code: DNA-binding protein Fis (101 aa).

The H-T-H motif DNA-binding region spans Q77–K96.

Belongs to the transcriptional regulatory Fis family. Homodimer.

In terms of biological role, activates ribosomal RNA transcription. Plays a direct role in upstream activation of rRNA promoters. The chain is DNA-binding protein Fis from Shewanella baltica (strain OS223).